The primary structure comprises 176 residues: Peptide deformylase 2 (176 aa).

Positions 99 and 141 each coordinate Fe cation. Glu142 is a catalytic residue. His145 contacts Fe cation.

The protein belongs to the polypeptide deformylase family. Fe(2+) is required as a cofactor.

It carries out the reaction N-terminal N-formyl-L-methionyl-[peptide] + H2O = N-terminal L-methionyl-[peptide] + formate. In terms of biological role, removes the formyl group from the N-terminal Met of newly synthesized proteins. Requires at least a dipeptide for an efficient rate of reaction. N-terminal L-methionine is a prerequisite for activity but the enzyme has broad specificity at other positions. The chain is Peptide deformylase 2 from Bordetella bronchiseptica (strain ATCC BAA-588 / NCTC 13252 / RB50) (Alcaligenes bronchisepticus).